The chain runs to 476 residues: Aspartyl/glutamyl-tRNA(Asn/Gln) amidotransferase subunit B (476 aa).

It belongs to the GatB/GatE family. GatB subfamily. As to quaternary structure, heterotrimer of A, B and C subunits.

It catalyses the reaction L-glutamyl-tRNA(Gln) + L-glutamine + ATP + H2O = L-glutaminyl-tRNA(Gln) + L-glutamate + ADP + phosphate + H(+). It carries out the reaction L-aspartyl-tRNA(Asn) + L-glutamine + ATP + H2O = L-asparaginyl-tRNA(Asn) + L-glutamate + ADP + phosphate + 2 H(+). Allows the formation of correctly charged Asn-tRNA(Asn) or Gln-tRNA(Gln) through the transamidation of misacylated Asp-tRNA(Asn) or Glu-tRNA(Gln) in organisms which lack either or both of asparaginyl-tRNA or glutaminyl-tRNA synthetases. The reaction takes place in the presence of glutamine and ATP through an activated phospho-Asp-tRNA(Asn) or phospho-Glu-tRNA(Gln). This chain is Aspartyl/glutamyl-tRNA(Asn/Gln) amidotransferase subunit B, found in Variovorax paradoxus (strain S110).